Here is a 347-residue protein sequence, read N- to C-terminus: 8-amino-8-demethylriboflavin N,N-dimethyltransferase (347 aa).

S-adenosyl-L-methionine contacts are provided by residues Asp209 and 235-237; that span reads GDF.

It belongs to the class I-like SAM-binding methyltransferase superfamily. Cation-independent O-methyltransferase family. Homodimer.

It carries out the reaction 8-amino-8-demethylriboflavin + 2 S-adenosyl-L-methionine = roseoflavin + 2 S-adenosyl-L-homocysteine + 2 H(+). It participates in antibiotic biosynthesis. Catalyzes the S-adenosyl methionine-dependent conversion of 8-amino-8-demethyl-D-riboflavin (AF) into 8-methylamino-8-demethyl-D-riboflavin (MAF) and roseoflavin (RoF), the last two steps in the biosynthesis of the antibiotic roseoflavin. This is 8-amino-8-demethylriboflavin N,N-dimethyltransferase from Streptomyces davaonensis (strain DSM 101723 / JCM 4913 / KCC S-0913 / 768).